The primary structure comprises 417 residues: L-rhamnose isomerase (417 aa).

Positions 261, 293, and 295 each coordinate Mn(2+).

Belongs to the rhamnose isomerase family. It depends on Mn(2+) as a cofactor.

It is found in the cytoplasm. The catalysed reaction is L-rhamnopyranose = L-rhamnulose. Its pathway is carbohydrate degradation; L-rhamnose degradation; glycerone phosphate from L-rhamnose: step 1/3. Catalyzes the interconversion of L-rhamnose and L-rhamnulose. This chain is L-rhamnose isomerase, found in Oceanobacillus iheyensis (strain DSM 14371 / CIP 107618 / JCM 11309 / KCTC 3954 / HTE831).